We begin with the raw amino-acid sequence, 550 residues long: Hydroxylamine reductase (550 aa).

4 residues coordinate [2Fe-2S] cluster: C3, C6, C18, and C25. The hybrid [4Fe-2O-2S] cluster site is built by H249, E273, C317, C405, C433, C458, E492, and K494. At C405 the chain carries Cysteine persulfide.

This sequence belongs to the HCP family. Requires [2Fe-2S] cluster as cofactor. Hybrid [4Fe-2O-2S] cluster is required as a cofactor.

The protein resides in the cytoplasm. The catalysed reaction is A + NH4(+) + H2O = hydroxylamine + AH2 + H(+). Functionally, catalyzes the reduction of hydroxylamine to form NH(3) and H(2)O. In Salmonella typhi, this protein is Hydroxylamine reductase.